The chain runs to 155 residues: Small ribosomal subunit protein uS7cz/uS7cy (155 aa).

The protein belongs to the universal ribosomal protein uS7 family. Part of the 30S ribosomal subunit.

It is found in the plastid. The protein resides in the chloroplast. In terms of biological role, one of the primary rRNA binding proteins, it binds directly to 16S rRNA where it nucleates assembly of the head domain of the 30S subunit. The chain is Small ribosomal subunit protein uS7cz/uS7cy (rps7-A) from Coffea arabica (Arabian coffee).